A 270-amino-acid chain; its full sequence is Ribosomal RNA small subunit methyltransferase A (270 aa).

Residues Asn-15, Ile-17, Gly-42, Glu-64, Asp-89, and Asn-108 each contribute to the S-adenosyl-L-methionine site.

It belongs to the class I-like SAM-binding methyltransferase superfamily. rRNA adenine N(6)-methyltransferase family. RsmA subfamily.

The protein resides in the cytoplasm. It carries out the reaction adenosine(1518)/adenosine(1519) in 16S rRNA + 4 S-adenosyl-L-methionine = N(6)-dimethyladenosine(1518)/N(6)-dimethyladenosine(1519) in 16S rRNA + 4 S-adenosyl-L-homocysteine + 4 H(+). Specifically dimethylates two adjacent adenosines (A1518 and A1519) in the loop of a conserved hairpin near the 3'-end of 16S rRNA in the 30S particle. May play a critical role in biogenesis of 30S subunits. This is Ribosomal RNA small subunit methyltransferase A from Anaplasma marginale (strain Florida).